The following is a 211-amino-acid chain: Protein-methionine-sulfoxide reductase heme-binding subunit MsrQ (211 aa).

5 helical membrane passes run 8 to 28 (VIWLKVCLHLAGLLPFLWLVW), 54 to 74 (FLLAALLITPLARYAKQPLLI), 82 to 102 (LWCFAWATLHLTSYALLELGV), 116 to 136 (PYLTLGIISWVILLALAFTST), and 153 to 173 (FVYLVAILAPIHYLWSVKIIS).

It belongs to the MsrQ family. In terms of assembly, heterodimer of a catalytic subunit (MsrP) and a heme-binding subunit (MsrQ). It depends on FMN as a cofactor. The cofactor is heme b.

It is found in the cell inner membrane. In terms of biological role, part of the MsrPQ system that repairs oxidized periplasmic proteins containing methionine sulfoxide residues (Met-O), using respiratory chain electrons. Thus protects these proteins from oxidative-stress damage caused by reactive species of oxygen and chlorine generated by the host defense mechanisms. MsrPQ is essential for the maintenance of envelope integrity under bleach stress, rescuing a wide series of structurally unrelated periplasmic proteins from methionine oxidation, including the primary periplasmic chaperone SurA and the lipoprotein Pal. MsrQ provides electrons for reduction to the reductase catalytic subunit MsrP, using the quinone pool of the respiratory chain. In Escherichia coli O6:K15:H31 (strain 536 / UPEC), this protein is Protein-methionine-sulfoxide reductase heme-binding subunit MsrQ.